A 709-amino-acid chain; its full sequence is Solute carrier organic anion transporter family member 2B1 (709 aa).

The disordered stretch occupies residues 1–38 (MGPRIGPAGEVPQVPDKETKATMGTENTPGGKASPDPQ). The Cytoplasmic portion of the chain corresponds to 1–49 (MGPRIGPAGEVPQVPDKETKATMGTENTPGGKASPDPQDVRPSVFHNIK). Serine 34 carries the phosphoserine modification. The helical transmembrane segment at 50 to 69 (LFVLCHSLLQLAQLMISGYL) threads the bilayer. The required for E1S and taurocholate transport; required for transporter stability stretch occupies residues 51–69 (FVLCHSLLQLAQLMISGYL). Over 70-88 (KSSISTVEKRFGLSSQTSG) the chain is Extracellular. Residues 89–109 (LLASFNEVGNTALIVFVSYFG) traverse the membrane as a helical segment. At 110-115 (SRVHRP) the chain is on the cytoplasmic side. The chain crosses the membrane as a helical span at residues 116–140 (RMIGYGAILVALAGLLMTLPHFISE). The Extracellular portion of the chain corresponds to 141–185 (PYRYDNTSPEDMPQDFKASLCLPTTSAPASAPSNGNCSSYTETQH). Asparagine 176 carries an N-linked (GlcNAc...) asparagine glycan. The chain crosses the membrane as a helical span at residues 186-215 (LSVVGIMFVAQTLLGVGGVPIQPFGISYID). The Cytoplasmic segment spans residues 216 to 234 (DFAHNSNSPLYLGILFAVT). The chain crosses the membrane as a helical span at residues 235-255 (MMGPGLAFGLGSLMLRLYVDI). Topologically, residues 256 to 273 (NQMPEGGISLTIKDPRWV) are extracellular. The chain crosses the membrane as a helical span at residues 274 to 298 (GAWWLGFLIAAGAVALAAIPYFFFP). The Cytoplasmic portion of the chain corresponds to 299–366 (KEMPKEKREL…IKVFPRVLLQ (68 aa)). Threonine 318 is subject to Phosphothreonine. The disordered stretch occupies residues 319–342 (DSPARKGKDSPSKQSPGESTKKQD). Residue serine 320 is modified to Phosphoserine. The helical transmembrane segment at 367 to 388 (TLRHPIFLLVVLSQVCLSSMAA) threads the bilayer. The Extracellular portion of the chain corresponds to 389 to 408 (GMATFLPKFLERQFSITASY). Residues 409–432 (ANLLIGCLSFPSVIVGIVVGGVLV) form a helical membrane-spanning segment. At 433 to 436 (KRLH) the chain is on the cytoplasmic side. The helical transmembrane segment at 437–460 (LGPVGCGALCLLGMLLCLFFSLPL) threads the bilayer. At 461-564 (FFIGCSSHQI…STCSHLVVPF (104 aa)) the chain is on the extracellular side. A Kazal-like domain is found at 483 to 543 (LELSPSCMEA…VFYTNCSCVV (61 aa)). Intrachain disulfides connect cysteine 489–cysteine 520, cysteine 495–cysteine 516, and cysteine 504–cysteine 541. Residue asparagine 538 is glycosylated (N-linked (GlcNAc...) asparagine). The chain crosses the membrane as a helical span at residues 565–587 (LLLVSLGSALACLTHTPSFMLIL). Topologically, residues 588–596 (RGVKKEDKT) are cytoplasmic. A helical membrane pass occupies residues 597–622 (LAVGIQFMFLRILAWMPSPVIHGSAI). Residues 623-655 (DTTCVHWALSCGRRAVCRYYNNDLLRNRFIGLQ) lie on the Extracellular side of the membrane. A helical transmembrane segment spans residues 656-673 (FFFKTGSVICFALVLAVL). Over 674–709 (RQQDKEARTKESRSSPAVEQQLLVSGPGKKPEDSRV) the chain is Cytoplasmic. The tract at residues 679–709 (EARTKESRSSPAVEQQLLVSGPGKKPEDSRV) is disordered.

Belongs to the organo anion transporter (TC 2.A.60) family. Strongly expressed in the liver, at the sinusoidal membrane of the hepatocytes. Expressed in the kidney. Expressed in placental trophoblasts and syncytiotrophoblast. Expressed in the small intestine. Expressed in the blood-brain barrier, in endothelial cells of brain capillaries. Expressed in the retina, in the inner nuclear layer and the inner plexiform layer. Expressed in skelettal muscles. In testis, primarily localized to the basal membrane of Sertoli cells and weakly expressed within the tubules. Also expressed in pancreas, lung, heart, colon, ovary and spleen. Expressed in fetal brain, heart, kidney, liver, lung, skeletal muscle, spleen and pancreas. In terms of tissue distribution, highest expression in brain. Predominant isoform compared to isoform 3 in small intestine duodenum, kidney, placenta, and skeletal muscle. As to expression, predominant isoform compared to isoform 1 in liver. Also expressed in small intestine duodenum, kidney, brain, placenta, and skeletal muscle.

The protein resides in the cell membrane. It localises to the basal cell membrane. It is found in the basolateral cell membrane. Its subcellular location is the apical cell membrane. The catalysed reaction is dehydroepiandrosterone 3-sulfate(out) = dehydroepiandrosterone 3-sulfate(in). It catalyses the reaction estrone 3-sulfate(out) = estrone 3-sulfate(in). It carries out the reaction estrone 3-sulfate(out) + hydrogencarbonate(in) = estrone 3-sulfate(in) + hydrogencarbonate(out). The enzyme catalyses taurocholate(out) = taurocholate(in). The catalysed reaction is coproporphyrin III(out) = coproporphyrin III(in). It catalyses the reaction substance P(out) = substance P(in). It carries out the reaction pregnenolone sulfate(out) = pregnenolone sulfate(in). The enzyme catalyses prostaglandin E2(out) = prostaglandin E2(in). The catalysed reaction is prostaglandin D2(out) = prostaglandin D2(in). It catalyses the reaction L-thyroxine(out) = L-thyroxine(in). Its activity is regulated as follows. E1S, DHEA-S and PregS transports are regulated by steroid hormones. In the case of testosterone, transport of E1S and DHEA-S was inhibited, whereas progesterone stimulated E1S, DHEA-S and PregS uptake. Progesterone stimulates high-affinity uptake of E1S whereas it inhibits low-affinity uptake of E1S. Progesterone doesn't affect the uptake of PGE2. Mediates the Na(+)-independent transport of steroid sulfate conjugates and other specific organic anions. Responsible for the transport of estrone 3-sulfate (E1S) through the basal membrane of syncytiotrophoblast, highlighting a potential role in the placental absorption of fetal-derived sulfated steroids including the steroid hormone precursor dehydroepiandrosterone sulfate (DHEA-S). Also facilitates the uptake of sulfated steroids at the basal/sinusoidal membrane of hepatocytes, therefore accounting for the major part of organic anions clearance of liver. Mediates the intestinal uptake of sulfated steroids. Mediates the uptake of the neurosteroids DHEA-S and pregnenolone sulfate (PregS) into the endothelial cells of the blood-brain barrier as the first step to enter the brain. Also plays a role in the reuptake of neuropeptides such as substance P/TAC1 and vasoactive intestinal peptide/VIP released from retinal neurons. May act as a heme transporter that promotes cellular iron availability via heme oxygenase/HMOX2 and independently of TFRC. Also transports heme by-product coproporphyrin III (CPIII), and may be involved in their hepatic disposition. Mediates the uptake of other substrates such as prostaglandins D2 (PGD2), E1 (PGE1) and E2 (PGE2), taurocholate, L-thyroxine, leukotriene C4 and thromboxane B2. May contribute to regulate the transport of organic compounds in testis across the blood-testis-barrier. Shows a pH-sensitive substrate specificity which may be ascribed to the protonation state of the binding site and leads to a stimulation of substrate transport in an acidic microenvironment. The exact transport mechanism has not been yet deciphered but most likely involves an anion exchange, coupling the cellular uptake of organic substrate with the efflux of an anionic compound. Hydrogencarbonate/HCO3(-) acts as a probable counteranion that exchanges for organic anions. Cytoplasmic glutamate may also act as counteranion in the placenta. An inwardly directed proton gradient has also been proposed as the driving force of E1S uptake with a (H(+):E1S) stoichiometry of (1:1). Its function is as follows. Has estrone 3-sulfate (E1S) transport activity comparable with the full-length isoform 1. In Homo sapiens (Human), this protein is Solute carrier organic anion transporter family member 2B1.